The chain runs to 161 residues: Cytochrome b6-f complex subunit 4 (161 aa).

3 helical membrane passes run 37–57 (LLYIFPVVIMGTIALVIGLAV), 96–116 (LLGVLMNASIPLGLMLIPFIE), and 130–150 (AMTVFLFGTLVTLWLGIGAAF).

The protein belongs to the cytochrome b family. PetD subfamily. In terms of assembly, the 4 large subunits of the cytochrome b6-f complex are cytochrome b6, subunit IV (17 kDa polypeptide, PetD), cytochrome f and the Rieske protein, while the 4 small subunits are PetG, PetL, PetM and PetN. The complex functions as a dimer.

The protein resides in the cellular thylakoid membrane. Its function is as follows. Component of the cytochrome b6-f complex, which mediates electron transfer between photosystem II (PSII) and photosystem I (PSI), cyclic electron flow around PSI, and state transitions. This chain is Cytochrome b6-f complex subunit 4, found in Synechococcus elongatus.